We begin with the raw amino-acid sequence, 283 residues long: Protoheme IX farnesyltransferase 1 (283 aa).

9 helical membrane passes run I14–D34, P35–F55, L84–F104, V107–L127, T133–V153, V163–L183, I208–L228, V231–V251, and W258–F278.

Belongs to the UbiA prenyltransferase family. Protoheme IX farnesyltransferase subfamily.

It localises to the cell inner membrane. The enzyme catalyses heme b + (2E,6E)-farnesyl diphosphate + H2O = Fe(II)-heme o + diphosphate. It functions in the pathway porphyrin-containing compound metabolism; heme O biosynthesis; heme O from protoheme: step 1/1. Its function is as follows. Converts heme B (protoheme IX) to heme O by substitution of the vinyl group on carbon 2 of heme B porphyrin ring with a hydroxyethyl farnesyl side group. This chain is Protoheme IX farnesyltransferase 1, found in Paramagnetospirillum magneticum (strain ATCC 700264 / AMB-1) (Magnetospirillum magneticum).